Here is a 530-residue protein sequence, read N- to C-terminus: MSISLGNAFIKNFLGKAPDWYKIAILSFLVINPLVFFFVDPFTAGWLLVVEFIFTLAMALKCYPLQPGGLLAIEAIAIGMTSPEQVKHELVANIEVLLLLVFMVAGIYFMKQLLLFIFTKILIGIKSKTALSVAFCFTAAFLSAFLDALTVIAVVISVAVGFYAIYHRVASGQGGSQTHDHTCDSDVDELTREDLEDYRAFLRSLLIHAGVGTALGGVMTMVGEPQNLIIADQAGWMFGEFIIRMLPITAPVFICGILTCIAVEKLGICGYGAKLPENVRKILEDYEAEERKNRTNIDNAKLIIQGLIAVWLIVGLALHLAAVGLIGLSVIILATAFTGVIEEHSMGKAFEEALPFTALLAVFFAVVAVIIDQELFKPIIDAVLAVEDKGAQLALFYVANGVLSMVSDNVFVGTVYINEVKAALMDGVITRDQFDLLAVAINTGTNLPSVATPNGQAAFLFLLTSALAPLIQLSYGRMVWMALPYTIVLALVGMFGIIFFLEPMTAMFYDLGWIAPGTIESATSAISSGH.

The next 12 membrane-spanning stretches (helical) occupy residues 13-33 (FLGK…VINP), 34-54 (LVFF…EFIF), 90-110 (LVAN…IYFM), 121-141 (ILIG…TAAF), 145-165 (FLDA…FYAI), 205-225 (LLIH…VGEP), 241-261 (FIIR…LTCI), 306-326 (GLIA…VGLI), 327-347 (GLSV…HSMG), 351-371 (EEAL…AVII), 455-475 (GQAA…QLSY), and 481-501 (MALP…IFFL).

This sequence belongs to the NhaB Na(+)/H(+) (TC 2.A.34) antiporter family.

It localises to the cell inner membrane. The enzyme catalyses 2 Na(+)(in) + 3 H(+)(out) = 2 Na(+)(out) + 3 H(+)(in). Its function is as follows. Na(+)/H(+) antiporter that extrudes sodium in exchange for external protons. The polypeptide is Na(+)/H(+) antiporter NhaB (Aliivibrio fischeri (strain MJ11) (Vibrio fischeri)).